The following is a 344-amino-acid chain: Putative F-box/kelch-repeat protein At1g19930 (344 aa).

The 47-residue stretch at 8–54 folds into the F-box domain; sequence TELIFSLPNDLLVNILARVSRLDYPILSLVSKRFSSVLTLPELYQTR. Kelch repeat units follow at residues 122 to 168, 170 to 195, 196 to 241, and 243 to 276; these read NIYN…LLDG, IYVT…VDGK, LHSC…YYYY, and NENI…NVRL.

This Arabidopsis thaliana (Mouse-ear cress) protein is Putative F-box/kelch-repeat protein At1g19930.